We begin with the raw amino-acid sequence, 108 residues long: Transcription factor AmrZ (108 aa).

Its function is as follows. Functions both as a transcriptional activator and a repressor of multiple genes encoding virulence factors as well as genes involved in environmental adaptation. Represses genes involved in iron homeostasis. Modulates intracellular levels of c-di-GMP which in turn regulates swimming motility and biofilm formation. This Pseudomonas ogarae (strain DSM 112162 / CECT 30235 / F113) protein is Transcription factor AmrZ.